The following is a 217-amino-acid chain: Tectonin-1 (217 aa).

Tandem repeats lie at residues 2-37, 38-74, 75-111, 112-146, 147-182, and 183-217. Positions 2-217 are 6 X approximate tandem repeats; the sequence is VHWEKHEGEL…KLHHIYKATL (216 aa).

Belongs to the tectonin family.

It is found in the cell surface. The protein localises to the cytoplasmic vesicle membrane. Probably involved in bacterial recognition. May be a lectin that function as part of a transmembrane signaling complex during phagocytosis. This is Tectonin-1 (TECA) from Physarum polycephalum (Slime mold).